Consider the following 154-residue polypeptide: Probable chemoreceptor glutamine deamidase CheD (154 aa).

The protein belongs to the CheD family.

The enzyme catalyses L-glutaminyl-[protein] + H2O = L-glutamyl-[protein] + NH4(+). In terms of biological role, probably deamidates glutamine residues to glutamate on methyl-accepting chemotaxis receptors (MCPs), playing an important role in chemotaxis. This is Probable chemoreceptor glutamine deamidase CheD from Methanococcus maripaludis (strain C5 / ATCC BAA-1333).